Reading from the N-terminus, the 306-residue chain is Nucleotide-binding protein RSal33209_2275 (306 aa).

Residue 29–36 coordinates ATP; the sequence is GMSGAGRS. Residue 80–83 participates in GTP binding; sequence DVRG.

The protein belongs to the RapZ-like family.

Displays ATPase and GTPase activities. This Renibacterium salmoninarum (strain ATCC 33209 / DSM 20767 / JCM 11484 / NBRC 15589 / NCIMB 2235) protein is Nucleotide-binding protein RSal33209_2275.